Reading from the N-terminus, the 865-residue chain is MKHVRHFIPSLFLSLVHVCLVQANYAPYFFDNGARSTNGNMALLSLSEDTPVGSHVYTLNGTDPEGDPVTYGLTYEAGSRRYFSVDGNLGNVTLIEELDREKEDEIEVIVSISDGLSTVSEKVRILVMDANDESPEFINTPYIVQVPENSPSGSSIFKIEAVDRDTGSGGSITYFLQNIHANKFTIDRHSGVLRIKSGVTLDYEKSRTHFVVVVAKDGGGKLRGDNKVFSATTTVTVNVEDVQDTPPMFIGTPYYGYVYEDTLPGSEVLTVVALDGDRGKPNNIHYCIVNGSEGSFEISNTTGAISVIKSPNQLKKEVYELRVQASEVSPEGDVSAYAFATVTIRVVDLNNHPPTFYGESGPQNRFELTMYEHPPEGEILRGLKITVNDSDQGANAKFNLRLVGPGGIFRVVPLTVLNEAQVTIIVENSAAIDYEKFKVLTFKLLAIEVNTPEKFSSTADIAIRLLDTNDNVPKFSSDYYIARIPENSPGGSNVVAVTATDPDSGLWGEVKYSIYGTGADLFLIHPSTGIIYTQPWAVLDAEVNSKYNFYVKAEDTDGKYSLAEVFITVLDVNDHSPEFNENIQEKTMIIGSPVKIEAIDQDAEEPNNIVDYSIMQADPANVFDIDQSTGEIKLKSYIRSLDIIHNITKNKDCIWSLVVQAKDRGSPSFSTTAVLKIDITEETLHKGPMAAFLMQTKDNPMKALGVLAGVMGIMVLITIMISTAMFWRNKRSNKIMPVRRIIKKRQTQQSRTVRMEWLKFKRPSNAAEKFVVEDDAKSLQNENSNNNVQAAPVPPAAPLPPPPPALAASGNTTAWRVPTVSGSLTPKFINKQLKKRGHSSTHNALVSELKMKFEKRNASMGEPHI.

The first 23 residues, 1 to 23, serve as a signal peptide directing secretion; sequence MKHVRHFIPSLFLSLVHVCLVQA. The Extracellular portion of the chain corresponds to 24–705; sequence NYAPYFFDNG…TKDNPMKALG (682 aa). Cadherin domains lie at 38-137, 138-249, 250-356, 362-475, 476-579, and 571-690; these read NGNM…SPEF, INTP…PPMF, IGTP…PPTF, PQNR…VPKF, SSDY…SPEF, and DVND…GPMA. The helical transmembrane segment at 706–726 threads the bilayer; sequence VLAGVMGIMVLITIMISTAMF. Topologically, residues 727–865 are cytoplasmic; that stretch reads WRNKRSNKIM…RNASMGEPHI (139 aa). Positions 782–810 are disordered; sequence ENSNNNVQAAPVPPAAPLPPPPPALAASG. Pro residues predominate over residues 792-805; that stretch reads PVPPAAPLPPPPPA.

The protein localises to the membrane. Potential calcium-dependent cell-adhesion protein. The polypeptide is Cadherin-related family member 1 (CDHR1) (Gallus gallus (Chicken)).